The sequence spans 418 residues: Glutamyl-tRNA reductase (418 aa).

Residues 49-52 (TCNR), Ser109, 114-116 (EPQ), and Gln120 each bind substrate. The active-site Nucleophile is Cys50. 189-194 (GAGETI) serves as a coordination point for NADP(+).

It belongs to the glutamyl-tRNA reductase family. In terms of assembly, homodimer.

It carries out the reaction (S)-4-amino-5-oxopentanoate + tRNA(Glu) + NADP(+) = L-glutamyl-tRNA(Glu) + NADPH + H(+). It functions in the pathway porphyrin-containing compound metabolism; protoporphyrin-IX biosynthesis; 5-aminolevulinate from L-glutamyl-tRNA(Glu): step 1/2. In terms of biological role, catalyzes the NADPH-dependent reduction of glutamyl-tRNA(Glu) to glutamate 1-semialdehyde (GSA). The polypeptide is Glutamyl-tRNA reductase (Shigella flexneri).